The primary structure comprises 628 residues: Propionate--CoA ligase (628 aa).

It belongs to the ATP-dependent AMP-binding enzyme family.

The catalysed reaction is propanoate + ATP + CoA = propanoyl-CoA + AMP + diphosphate. The protein operates within organic acid metabolism; propanoate degradation. Functionally, catalyzes the synthesis of propionyl-CoA from propionate and CoA. Also converts acetate to acetyl-CoA but with a lower specific activity. The sequence is that of Propionate--CoA ligase (prpE) from Salmonella typhimurium (strain LT2 / SGSC1412 / ATCC 700720).